A 497-amino-acid polypeptide reads, in one-letter code: Galactose-1-phosphate uridylyltransferase (497 aa).

It belongs to the galactose-1-phosphate uridylyltransferase type 2 family.

It localises to the cytoplasm. The enzyme catalyses alpha-D-galactose 1-phosphate + UDP-alpha-D-glucose = alpha-D-glucose 1-phosphate + UDP-alpha-D-galactose. Its pathway is carbohydrate metabolism; galactose metabolism. This Clostridium acetobutylicum (strain ATCC 824 / DSM 792 / JCM 1419 / IAM 19013 / LMG 5710 / NBRC 13948 / NRRL B-527 / VKM B-1787 / 2291 / W) protein is Galactose-1-phosphate uridylyltransferase.